The primary structure comprises 342 residues: Putative TPR repeat-containing protein R856 (342 aa).

TPR repeat units follow at residues 36-69 (VHIF…IFNG), 77-110 (FYSV…IKDM), 119-152 (VYAL…NEKL), 161-194 (AFVL…YREK), 203-236 (AFTI…FNKI), 245-278 (AFSL…YKNV), and 291-324 (ASCL…FEST).

The chain is Putative TPR repeat-containing protein R856 from Acanthamoeba polyphaga mimivirus (APMV).